A 75-amino-acid polypeptide reads, in one-letter code: Endogenous retrovirus group K member 7 Np9 protein (75 aa).

Residues 24–43 (PKRQRPSRTGHDDDGGFVEK) form a disordered region. The segment covering 32–43 (TGHDDDGGFVEK) has biased composition (basic and acidic residues).

It is found in the nucleus. Functionally, may possess a function in tumorigenesis. This chain is Endogenous retrovirus group K member 7 Np9 protein (ERVK-7), found in Homo sapiens (Human).